Consider the following 1147-residue polypeptide: Myosin light chain kinase, smooth muscle (1147 aa).

Residues 1–41 are actin-binding; it reads MDFRANLQRQVKPKTVSEEERKVHSPQQVDFRSVLAKKGTP. The disordered stretch occupies residues 1 to 330; the sequence is MDFRANLQRQ…PPASPGTAPT (330 aa). A calmodulin-binding region spans residues 26–41; that stretch reads PQQVDFRSVLAKKGTP. Residues 43–55 show a composition bias toward pro residues; that stretch reads TPVPEKAPPPKPA. Tandem repeats lie at residues 100–111 and 112–123. The interval 100-288 is 16 X 12 AA tandem repeats; it reads SLKPVANAKP…KAVANAKPAE (189 aa). The stretch at 124-132 is one 3; truncated repeat; sequence TLKPVANAE. 13 tandem repeats follow at residues 133 to 144, 145 to 156, 157 to 168, 169 to 180, 181 to 192, 193 to 204, 205 to 216, 217 to 228, 229 to 240, 241 to 252, 253 to 264, 265 to 276, and 277 to 288. Positions 292-692 are actin-binding (calcium/calmodulin-insensitive); that stretch reads PAGKEELKKE…TVTVNTEQKV (401 aa). Positions 293-320 are enriched in basic and acidic residues; it reads AGKEELKKEVQNDVNCKREKAGAADNEK. 2 consecutive Ig-like C2-type domains span residues 329–417 and 469–557; these read PTFK…CHVT and PQIP…VNLT. A disulfide bond links Cys-350 and Cys-401. Disordered stretches follow at residues 424–476 and 644–678; these read SENA…QFPE and SEPSQESELTTVGEKPEEPKDEVEEVSDDDEKEPE. The segment covering 459-472 has biased composition (pro residues); it reads PKTPPKAATPPQIP. A Fibronectin type-III domain is found at 565–657; sequence PAGTPCASDI…QESELTTVGE (93 aa). Residues 644–653 are compositionally biased toward polar residues; that stretch reads SEPSQESELT. The span at 662–677 shows a compositional bias: acidic residues; the sequence is PKDEVEEVSDDDEKEP. The residue at position 670 (Ser-670) is a Phosphoserine. At Tyr-681 the chain carries Phosphotyrosine; by ABL1. The Protein kinase domain occupies 696 to 951; sequence YDIEERLGSG…CTQCLQHPWL (256 aa). ATP-binding positions include 702–710 and Lys-725; that span reads LGSGKFGQV. Tyr-807 is modified (phosphotyrosine; by ABL1). The active-site Proton acceptor is the Asp-817. At Tyr-867 the chain carries Phosphotyrosine; by ABL1. The calmodulin-binding stretch occupies residues 943–1006; the sequence is TQCLQHPWLM…SGLSGRKSST (64 aa). Ser-991, Ser-992, Ser-1004, Ser-1005, and Ser-1008 each carry phosphoserine. The segment at 999-1019 is disordered; sequence LSGRKSSTGSPTSPLTAERLE. The segment covering 1002-1013 has biased composition (polar residues); sequence RKSSTGSPTSPL. Thr-1010 carries the post-translational modification Phosphothreonine. Residue Ser-1011 is modified to Phosphoserine. The Ig-like C2-type 3 domain occupies 1041-1130; the sequence is PYFSKTIRDL…GEATCTAELI (90 aa). A disulfide bridge links Cys-1062 with Cys-1114.

It belongs to the protein kinase superfamily. CAMK Ser/Thr protein kinase family. In terms of assembly, all isoforms including Telokin bind calmodulin. Interacts with SVIL. Interacts with CTTN; this interaction is reduced during thrombin-induced endothelial cell (EC) contraction but is promoted by the barrier-protective agonist sphingosine 1-phosphate (S1P) within lamellipodia. A complex made of ABL1, CTTN and MYLK regulates cortical actin-based cytoskeletal rearrangement critical to sphingosine 1-phosphate (S1P)-mediated endothelial cell (EC) barrier enhancement. Binds to NAA10/ARD1 and PTK2B/PYK2. Mg(2+) serves as cofactor. Ca(2+) is required as a cofactor. In terms of processing, the C-terminus is deglutamylated by AGTPBP1/CCP1, AGBL1/CCP4 and AGBL4/CCP6, leading to the formation of Myosin light chain kinase, smooth muscle, deglutamylated form. The consequences of C-terminal deglutamylation are unknown. Post-translationally, can probably be down-regulated by phosphorylation. Tyrosine phosphorylation by ABL1 increases kinase activity, reverses MLCK-mediated inhibition of Arp2/3-mediated actin polymerization, and enhances CTTN-binding. Phosphorylation by SRC promotes CTTN binding. In terms of tissue distribution, isoform Telokin is found in all smooth muscle tested except the aorta. It is not present in non-muscle tissue.

It is found in the cytoplasm. The protein localises to the cell projection. The protein resides in the lamellipodium. Its subcellular location is the cleavage furrow. It localises to the cytoskeleton. It is found in the stress fiber. It carries out the reaction L-seryl-[myosin light chain] + ATP = O-phospho-L-seryl-[myosin light chain] + ADP + H(+). The enzyme catalyses L-threonyl-[myosin light chain] + ATP = O-phospho-L-threonyl-[myosin light chain] + ADP + H(+). Its activity is regulated as follows. All catalytically active isoforms require binding to calcium and calmodulin for activation. Functionally, calcium/calmodulin-dependent myosin light chain kinase implicated in smooth muscle contraction via phosphorylation of myosin light chains (MLC). Also regulates actin-myosin interaction through a non-kinase activity. Phosphorylates PTK2B/PYK2 and myosin light-chains. Involved in the inflammatory response (e.g. apoptosis, vascular permeability, leukocyte diapedesis), cell motility and morphology, airway hyperreactivity and other activities relevant to asthma. Required for tonic airway smooth muscle contraction that is necessary for physiological and asthmatic airway resistance. Necessary for gastrointestinal motility. Implicated in the regulation of endothelial as well as vascular permeability, probably via the regulation of cytoskeletal rearrangements. In the nervous system it has been shown to control the growth initiation of astrocytic processes in culture and to participate in transmitter release at synapses formed between cultured sympathetic ganglion cells. Critical participant in signaling sequences that result in fibroblast apoptosis. Plays a role in the regulation of epithelial cell survival. Required for epithelial wound healing, especially during actomyosin ring contraction during purse-string wound closure. Mediates RhoA-dependent membrane blebbing. Triggers TRPC5 channel activity in a calcium-dependent signaling, by inducing its subcellular localization at the plasma membrane. Promotes cell migration (including tumor cells) and tumor metastasis. PTK2B/PYK2 activation by phosphorylation mediates ITGB2 activation and is thus essential to trigger neutrophil transmigration during acute lung injury (ALI). May regulate optic nerve head astrocyte migration. Probably involved in mitotic cytoskeletal regulation. Regulates tight junction probably by modulating ZO-1 exchange in the perijunctional actomyosin ring. Mediates burn-induced microvascular barrier injury; triggers endothelial contraction in the development of microvascular hyperpermeability by phosphorylating MLC. Essential for intestinal barrier dysfunction. Mediates Giardia spp.-mediated reduced epithelial barrier function during giardiasis intestinal infection via reorganization of cytoskeletal F-actin and tight junctional ZO-1. Necessary for hypotonicity-induced Ca(2+) entry and subsequent activation of volume-sensitive organic osmolyte/anion channels (VSOAC) in cervical cancer cells. This is Myosin light chain kinase, smooth muscle (MYLK) from Oryctolagus cuniculus (Rabbit).